A 201-amino-acid chain; its full sequence is Translation initiation factor IF-3 (201 aa).

A disordered region spans residues 167-201; it reads PHRGAKTRARARHPGEPAGGPPPKPTAGDSKAAPN. Residues 169 to 178 show a composition bias toward basic residues; the sequence is RGAKTRARAR.

Belongs to the IF-3 family. In terms of assembly, monomer.

It localises to the cytoplasm. Functionally, IF-3 binds to the 30S ribosomal subunit and shifts the equilibrium between 70S ribosomes and their 50S and 30S subunits in favor of the free subunits, thus enhancing the availability of 30S subunits on which protein synthesis initiation begins. The polypeptide is Translation initiation factor IF-3 (Mycobacterium bovis (strain ATCC BAA-935 / AF2122/97)).